A 652-amino-acid chain; its full sequence is Vacuolar fusion protein MON1 homolog A (652 aa).

The interval 102 to 141 (MQRKRSSECLDGTLTPSDGQSMERAESPTPGMAQGMEPGA) is disordered. Residues serine 128 and serine 153 each carry the phosphoserine modification. A Phosphothreonine modification is found at threonine 158. The disordered stretch occupies residues 158–185 (TESEDGAASGDSHKEGTRGPPPLPTDMR). Serine 188 carries the phosphoserine modification. The disordered stretch occupies residues 211–245 (PGSSEDWLEPPGAVGRPATEPPREGTTEGDEEDAT).

It belongs to the MON1/SAND family. As to quaternary structure, interacts with CCZ1. Found in a complex with RMC1, CCZ1, MON1A and MON1B. The MON1A-CCZ1B complex interacts with RIMOC1. The MON1A-CCZ1B complex interacts with RAB7A and this interaction is enhanced in the presence of RIMOC1.

Plays an important role in membrane trafficking through the secretory apparatus. Not involved in endocytic trafficking to lysosomes. Acts in concert with CCZ1, as a guanine exchange factor (GEF) for RAB7, promotes the exchange of GDP to GTP, converting it from an inactive GDP-bound form into an active GTP-bound form. The protein is Vacuolar fusion protein MON1 homolog A (MON1A) of Homo sapiens (Human).